Here is a 320-residue protein sequence, read N- to C-terminus: Malate dehydrogenase (320 aa).

NAD(+) is bound by residues 10–15 (GAGQIG) and aspartate 34. Positions 83 and 89 each coordinate substrate. NAD(+) is bound by residues asparagine 96 and 119–121 (ITN). Substrate is bound by residues asparagine 121 and arginine 152. The active-site Proton acceptor is the histidine 176.

Belongs to the LDH/MDH superfamily. MDH type 3 family.

The enzyme catalyses (S)-malate + NAD(+) = oxaloacetate + NADH + H(+). Catalyzes the reversible oxidation of malate to oxaloacetate. The protein is Malate dehydrogenase of Methylobacterium nodulans (strain LMG 21967 / CNCM I-2342 / ORS 2060).